The sequence spans 362 residues: Glutaminase-asparaginase (362 aa).

Positions 1-25 (MKSALKTFVPGALALLLLFPVAAQA) are cleaved as a signal peptide. In terms of domain architecture, Asparaginase/glutaminase spans 35-362 (ANVVILATGG…KELQRMFWEY (328 aa)). T45 functions as the Acyl-ester intermediate in the catalytic mechanism. Substrate-binding positions include S92 and 125-126 (TD).

The protein belongs to the asparaginase 1 family. As to quaternary structure, homotetramer.

It localises to the periplasm. It catalyses the reaction L-glutamine + H2O = L-glutamate + NH4(+). It carries out the reaction L-asparagine + H2O = L-aspartate + NH4(+). The protein is Glutaminase-asparaginase of Pseudomonas fluorescens biotype A.